The primary structure comprises 629 residues: Arginyl-tRNA--protein transferase 1 (629 aa).

Disordered regions lie at residues 274 to 298 (QNNS…TNEP) and 353 to 405 (PDES…ITKE). A compositionally biased stretch (low complexity) spans 282–295 (TTTATTATTTTTTT). The span at 356-396 (SYDDYVYDGKDDDDDDDDKDEKEDDEDEDQEDDEDEDDGNN) shows a compositional bias: acidic residues.

This sequence belongs to the R-transferase family.

It carries out the reaction an N-terminal L-alpha-aminoacyl-[protein] + L-arginyl-tRNA(Arg) = an N-terminal L-arginyl-L-aminoacyl-[protein] + tRNA(Arg) + H(+). Its function is as follows. Involved in the post-translational conjugation of arginine to the N-terminal aspartate or glutamate of a protein. This arginylation is required for degradation of the protein via the ubiquitin pathway. Does not arginylate cysteine residues. The polypeptide is Arginyl-tRNA--protein transferase 1 (ate1) (Dictyostelium discoideum (Social amoeba)).